Consider the following 259-residue polypeptide: Kallikrein 1-related peptidase b22 (259 aa).

The signal sequence occupies residues 1–17 (MRFLILFLTLSLGGIDA). The propeptide at 18 to 24 (APPVQSR) is activation peptide. The 232-residue stretch at 25 to 256 (ILGGFKCEKN…FTSWIKDTMA (232 aa)) folds into the Peptidase S1 domain. Cystine bridges form between cysteine 31-cysteine 171, cysteine 50-cysteine 66, cysteine 150-cysteine 217, cysteine 182-cysteine 196, and cysteine 207-cysteine 232. Residue histidine 65 is the Charge relay system of the active site. Asparagine 102 carries an N-linked (GlcNAc...) asparagine glycan. Catalysis depends on aspartate 118, which acts as the Charge relay system. Catalysis depends on serine 211, which acts as the Charge relay system.

Belongs to the peptidase S1 family. Kallikrein subfamily.

The enzyme catalyses Preferential cleavage of Arg-|-Xaa bonds in small molecule substrates. Highly selective action to release kallidin (lysyl-bradykinin) from kininogen involves hydrolysis of Met-|-Xaa or Leu-|-Xaa.. Its function is as follows. Glandular kallikreins cleave Met-Lys and Arg-Ser bonds in kininogen to release Lys-bradykinin. This is Kallikrein 1-related peptidase b22 (Klk1b22) from Mus musculus (Mouse).